Consider the following 170-residue polypeptide: Capsid protein (170 aa).

A compositionally biased stretch (basic residues) spans 1–19 (MAQLRWGRKGVRSQRRKYS). The tract at residues 1–25 (MAQLRWGRKGVRSQRRKYSRPVAYK) is disordered.

It belongs to the nanoviridae capsid protein family.

The protein localises to the virion. In Subterranean clover stunt virus (strain J) (SCSV), this protein is Capsid protein (DNA-S).